Here is a 368-residue protein sequence, read N- to C-terminus: C6 finger domain transcription factor tcpZ (368 aa).

A DNA-binding region (zn(2)-C6 fungal-type) is located at residues 30–56 (CDACHASKVRCSGEPICARCQRDNVAC). Positions 84 to 109 (FIEQRQRPAASQPPGHGTSRDSSVCA) are disordered.

The protein localises to the nucleus. Functionally, transcription factor that specifically regulates the thioclapurine biosynthesis gene cluster. This Claviceps purpurea (strain 20.1) (Ergot fungus) protein is C6 finger domain transcription factor tcpZ.